Reading from the N-terminus, the 249-residue chain is MPSDRAATPKPSYKRILLKLSGEALMGDGKYGISPKTLSAIAGDVKDCVDLGVEVALTIGGGNIFRGVSGATEGMDRSSADYMGMLATVINAMALQDALEKIGVNTRVQSAIEMHQVAEPYIRRRAIRHLEKGRVVIFAAGTGNPYFTTDTAASLRAMEIHADVLLKATKVDGVYTDDPKKNPAATKFKQLSYIDVLKKNLKVMDSTAISLCMDNDLPIIVFDSTLRGNVRRVVLGEQIGTTVGRLEEK.

ATP is bound at residue 19–22 (KLSG). Gly-61 contacts UMP. Positions 62 and 66 each coordinate ATP. UMP contacts are provided by residues Asp-81 and 142 to 149 (TGNPYFTT). The ATP site is built by Thr-169, Tyr-175, and Asp-178.

This sequence belongs to the UMP kinase family. Homohexamer.

Its subcellular location is the cytoplasm. The catalysed reaction is UMP + ATP = UDP + ADP. It functions in the pathway pyrimidine metabolism; CTP biosynthesis via de novo pathway; UDP from UMP (UMPK route): step 1/1. Its activity is regulated as follows. Inhibited by UTP. Its function is as follows. Catalyzes the reversible phosphorylation of UMP to UDP. This Anaeromyxobacter sp. (strain Fw109-5) protein is Uridylate kinase.